A 477-amino-acid chain; its full sequence is AAA-ATPase At3g28600 (477 aa).

Residues 1–26 form the signal peptide; that stretch reads MMMGNTFGSSLASLFFLWATIQQIFP. 245–252 contributes to the ATP binding site; sequence GPPGTGKS.

It belongs to the AAA ATPase family. BCS1 subfamily. Requires Mg(2+) as cofactor.

It carries out the reaction ATP + H2O = ADP + phosphate + H(+). This Arabidopsis thaliana (Mouse-ear cress) protein is AAA-ATPase At3g28600.